The chain runs to 931 residues: Protocadherin gamma-A5 (931 aa).

Residues 1–29 (MASPPRGWGCGELLLPFMLLGTLCEPGSG) form the signal peptide. 6 consecutive Cadherin domains span residues 30-133 (QIRY…FPRF), 134-242 (RDEE…APLF), 243-347 (TPSE…APEV), 348-452 (ILTS…PPNF), 453-562 (PQAS…TPEI), and 570-683 (DGST…TPID). The Extracellular segment spans residues 30–692 (QIRYSMPEEL…DPEDLDLTLY (663 aa)). N-linked (GlcNAc...) asparagine glycosylation is found at Asn-419 and Asn-545. A helical transmembrane segment spans residues 693–713 (LVVAVAAVSCVFLAFVIVLLV). The Cytoplasmic portion of the chain corresponds to 714-931 (LRLRRWHKSR…KKKSGKKEKK (218 aa)). Disordered stretches follow at residues 800–840 (NKEE…WPNN) and 901–931 (ATLT…KEKK). The span at 809-840 (APPNTDWRFSQAQRPGTSGSQNGDDTGTWPNN) shows a compositional bias: polar residues. Basic residues predominate over residues 921-931 (NKKKSGKKEKK).

The protein resides in the cell membrane. Its function is as follows. Potential calcium-dependent cell-adhesion protein. May be involved in the establishment and maintenance of specific neuronal connections in the brain. The sequence is that of Protocadherin gamma-A5 (PCDHGA5) from Homo sapiens (Human).